Reading from the N-terminus, the 305-residue chain is Ribonuclease BN (305 aa).

Zn(2+) contacts are provided by His-64, His-66, Asp-68, His-69, His-141, Asp-212, and His-270. Catalysis depends on Asp-68, which acts as the Proton acceptor.

The protein belongs to the RNase Z family. RNase BN subfamily. As to quaternary structure, homodimer. Zn(2+) serves as cofactor.

Functionally, zinc phosphodiesterase, which has both exoribonuclease and endoribonuclease activities. This is Ribonuclease BN from Escherichia coli O45:K1 (strain S88 / ExPEC).